The primary structure comprises 620 residues: Transcription factor GTE11 (620 aa).

Residues 1-35 form a disordered region; sequence MTVRNGGFPGDYNRNSFDSPGGCDDSPNASKDDET. Residues 124-230 form the Bromo domain; it reads TSTMLRMKQC…KFFEVRWKTI (107 aa). An NET domain is found at 270–351; that stretch reads NSLLEPAKRV…EFLRENQKKD (82 aa). S417 is modified (phosphoserine). The segment at 445-620 is transcription activation domain; the sequence is EKRYRAALLK…GNEVEEGEID (176 aa). Residues 470-544 are a coiled coil; that stretch reads NQNEKRDPET…MEKSVEINEN (75 aa). 2 disordered regions span residues 491-511 and 597-620; these read KKKE…ARRK and EDED…GEID.

In terms of assembly, interacts with BT1, BT2 and BT4.

The protein localises to the nucleus. The sequence is that of Transcription factor GTE11 (GTE11) from Arabidopsis thaliana (Mouse-ear cress).